We begin with the raw amino-acid sequence, 427 residues long: Kallistatin (427 aa).

The first 20 residues, 1 to 20 (MHLIDYLLLLLVGLLALSHG), serve as a signal peptide directing secretion. Asn-33, Asn-108, and Asn-157 each carry an N-linked (GlcNAc...) asparagine glycan. N-linked (GlcNAc...) (complex) asparagine glycosylation is present at Asn-238.

The protein belongs to the serpin family. In terms of assembly, monomer and some homodimers. The N-terminus is blocked. Expressed by the liver and secreted in plasma.

The protein resides in the secreted. Functionally, inhibits human amidolytic and kininogenase activities of tissue kallikrein. Inhibition is achieved by formation of an equimolar, heat- and SDS-stable complex between the inhibitor and the enzyme, and generation of a small C-terminal fragment of the inhibitor due to cleavage at the reactive site by tissue kallikrein. The polypeptide is Kallistatin (SERPINA4) (Homo sapiens (Human)).